Here is a 776-residue protein sequence, read N- to C-terminus: GATOR2 complex protein Wdr24 (776 aa).

WD repeat units follow at residues 63–103 (NLSY…RQKQ), 109–149 (EHER…SINT), 152–192 (CNSE…KCMV), 196–235 (AHYG…GLEH), 238–280 (HTIA…IPFA), and 284–326 (EHTN…ALKA). The segment at 466–490 (HRSSFSNQKNPMNSRRATQVASDWP) is disordered. A compositionally biased stretch (polar residues) spans 469-490 (SFSNQKNPMNSRRATQVASDWP). The segment at 703 to 726 (NCGECGRPMGGKVGWYCDKCKSMQ) adopts a C4-type zinc-finger fold. Zn(2+) is bound by residues Cys704, Cys707, Cys719, Cys722, Cys730, Cys733, Cys744, Cys747, His749, His752, His755, Cys766, Cys769, His771, and Cys773. An RING-type; atypical zinc finger spans residues 728–776 (AKCCVCGLIVRGVYAWCQGCSHGGHIEHLQKYFAKHSKCPKCGHLCAYS).

This sequence belongs to the WD repeat WDR24 family. In terms of assembly, component of the GATOR complex consisting of mio, Nup44A/Seh1, Im11, Nplr3, Nplr2, Wdr24, Wdr59 and Sec13. Within the GATOR complex, probable component of the GATOR2 subcomplex which is likely composed of mio, Nup44A/Seh1, Wdr24, Wdr59 and Sec13. Interacts with Nup44A/Seh1. Interacts with mio. Interacts with Nplr3. The GATOR2 complex associates with unmet in the absence of S-adenosyl-L-methionine; the mio-Wdr24-Nup44A subcomplex is essential and sufficient for this interaction while Wdr59 and Sec13 are dispensable. This association acts as a nutrient sensor to inhibit mTORC1 signaling in the absence of methionine.

It localises to the lysosome. It is found in the cytoplasmic vesicle. The protein localises to the autophagosome. It carries out the reaction S-ubiquitinyl-[E2 ubiquitin-conjugating enzyme]-L-cysteine + [acceptor protein]-L-lysine = [E2 ubiquitin-conjugating enzyme]-L-cysteine + N(6)-ubiquitinyl-[acceptor protein]-L-lysine.. It participates in protein modification; protein ubiquitination. An essential component of the GATOR subcomplex GATOR2 which functions as an activator of the amino acid-sensing branch of the mTORC1 signaling pathway. The two GATOR subcomplexes, GATOR1 and GATOR2, regulate the mTORC1 pathway in order to mediate metabolic homeostasis, female gametogenesis and the response to amino acid limitation and complete starvation. GATOR2 activates the mTORC1 signaling pathway through the inhibition of the GATOR1 subcomplex, controlling the switch to cell proliferation and growth under nutrient replete conditions and during female oocyte development. GATOR2 probably acts as an E3 ubiquitin-protein ligase toward GATOR1. In the presence of abundant amino acids, the GATOR2 complex mediates ubiquitination of components of the GATOR1 complex, leading to GATOR1 inactivation. This GATOR2 component is required for activating mTORC1 and promoting cell growth in both germline and somatic cells. In addition to its role in regulation of the mTORC1 complex, functions independently of mTORC1 to promote the acidification of lysosomes and facilitates autophagic flux. The sequence is that of GATOR2 complex protein Wdr24 from Drosophila melanogaster (Fruit fly).